Reading from the N-terminus, the 335-residue chain is Anthranilate phosphoribosyltransferase (335 aa).

5-phospho-alpha-D-ribose 1-diphosphate contacts are provided by residues G79, 82 to 83, T87, 89 to 92, 107 to 115, and S119; these read GD, NIST, and KHGSRSVSS. G79 contributes to the anthranilate binding site. Position 91 (S91) interacts with Mg(2+). R165 lines the anthranilate pocket. Mg(2+) contacts are provided by D223 and E224.

The protein belongs to the anthranilate phosphoribosyltransferase family. In terms of assembly, homodimer. Mg(2+) is required as a cofactor.

It catalyses the reaction N-(5-phospho-beta-D-ribosyl)anthranilate + diphosphate = 5-phospho-alpha-D-ribose 1-diphosphate + anthranilate. It functions in the pathway amino-acid biosynthesis; L-tryptophan biosynthesis; L-tryptophan from chorismate: step 2/5. Catalyzes the transfer of the phosphoribosyl group of 5-phosphorylribose-1-pyrophosphate (PRPP) to anthranilate to yield N-(5'-phosphoribosyl)-anthranilate (PRA). In Helicobacter pylori (strain Shi470), this protein is Anthranilate phosphoribosyltransferase.